The chain runs to 371 residues: Putative HAD-like hydrolase Noc_2718 (371 aa).

Residues 1–288 are HAD-like hydrolase; that stretch reads MKQKILLCSD…TGREESAEEE (288 aa). Residues 291-371 enclose the YcgL domain; sequence QSCAIYRSCK…QLSSREYRRS (81 aa).

It in the N-terminal section; belongs to the HAD-like hydrolase superfamily.

The sequence is that of Putative HAD-like hydrolase Noc_2718 from Nitrosococcus oceani (strain ATCC 19707 / BCRC 17464 / JCM 30415 / NCIMB 11848 / C-107).